A 153-amino-acid polypeptide reads, in one-letter code: Small ribosomal subunit protein bS16 (153 aa).

The tract at residues 130-153 (EAEAAAAAEEAPAEEAAEEAPAEA) is disordered. Residues 140-153 (APAEEAAEEAPAEA) show a composition bias toward acidic residues.

The protein belongs to the bacterial ribosomal protein bS16 family.

This Bifidobacterium longum subsp. infantis (strain ATCC 15697 / DSM 20088 / JCM 1222 / NCTC 11817 / S12) protein is Small ribosomal subunit protein bS16.